The sequence spans 718 residues: MFRAQATTPYDTAIAKATDENLTSEDWGAIMEVCDRVAGDDNGAKEAVQALIRRLAHRNANVQLYTLEVANALSQNCGKPMHRELASRAFTEALLKLANERNTHNQVKAKILEGTKEWSDMFKDDADLGIMYDAYYRLKQTNPQLQPPSAPQKNSLTDVDRQKEEEELQIALKLSLQEEERKKQQTPAGPSGAAGPSSSSAPDQAGTPSGQGADAGAGAAAVPLQPTGTGTTAATVSRVRALYDFVPSEDGELEFKKGDVIAVLESVYKDWWRGSLKGKTGIFPLNYVEKLADPTPDELQREAQMEAEVFSEIKNVEKLLTLLSTSSKDEDSEEIAKLYQQTSAIRPKLIKLIEKYSQKKDDFTQLNEKFIKARRDYEALLETSMSHPPQPSYHQYAVRPQGYGGSPTPYPTQGPPQQDPQRFYPPGPHPDQYPPSSPSPHLQRPGGTPGPGAQAPFYVAGAEVPSHGGPHPNQNFPPRDPGQRIPSAGKQPARLQTQQASSSPPPSAPYAAYSQPPAQQGSYGNPQELSTSAYDSPVASHPHPNPLGSNAPFAPATYPAEERYGTPSAAPAPLNPGGGQQQPYQYNSYQNQTPPQPANTQPPQGGMYSGQGYNDSSDAVGNVPPQPTSAAPPPPVPGSQRVHSPVYGGPPGAADSRFSLPSRMGPGAPSAPLGGPSSPGEQPQYKAYVPPGSSGPSAPSAPSVPADYYRQPGGTANY.

Residues 17–146 (ATDENLTSED…RLKQTNPQLQ (130 aa)) form the VHS domain. Disordered regions lie at residues 142–164 (NPQLQPPSAPQKNSLTDVDRQKE) and 178–230 (EEER…TGTG). Residues 163–182 (KEEEELQIALKLSLQEEERK) form the UIM domain. Composition is skewed to low complexity over residues 187–202 (PAGPSGAAGPSSSSAP) and 210–221 (GQGADAGAGAAA). The SH3 domain maps to 234–293 (ATVSRVRALYDFVPSEDGELEFKKGDVIAVLESVYKDWWRGSLKGKTGIFPLNYVEKLAD). Residues 384–718 (SMSHPPQPSY…YRQPGGTANY (335 aa)) are disordered. The segment covering 408–438 (TPYPTQGPPQQDPQRFYPPGPHPDQYPPSSP) has biased composition (pro residues). Low complexity predominate over residues 509–520 (PYAAYSQPPAQQ). A compositionally biased stretch (polar residues) spans 521-534 (GSYGNPQELSTSAY). The segment covering 581 to 604 (QQPYQYNSYQNQTPPQPANTQPPQ) has biased composition (low complexity). Positions 624-637 (PPQPTSAAPPPPVP) are enriched in pro residues. Low complexity-rich tracts occupy residues 665–680 (GPGAPSAPLGGPSSPG) and 689–706 (VPPGSSGPSAPSAPSVPA).

The protein belongs to the STAM family. As to quaternary structure, component of the ESCRT-0 complex composed of HSE1 and VPS27.

It localises to the endosome membrane. Its function is as follows. Component of the ESCRT-0 complex which is the sorting receptor for ubiquitinated cargo proteins at the multivesicular body (MVB). The polypeptide is Class E vacuolar protein-sorting machinery protein HSE1 (HSE1) (Pyricularia oryzae (strain 70-15 / ATCC MYA-4617 / FGSC 8958) (Rice blast fungus)).